We begin with the raw amino-acid sequence, 189 residues long: Adenylate kinase (189 aa).

An ATP-binding site is contributed by 10 to 15; sequence AAGKGT. Positions 30–59 are NMP; sequence STGDMLRAAIASGSELGQKVKGVLDRGELV. Residues threonine 31, arginine 36, 57 to 59, 85 to 88, and glutamine 92 contribute to the AMP site; these read ELV and GFPR. The LID stretch occupies residues 126-136; it reads KRFAEQGRPDD. Arginine 127 contacts ATP. AMP-binding residues include arginine 133 and arginine 144. Alanine 172 is a binding site for ATP.

This sequence belongs to the adenylate kinase family. As to quaternary structure, monomer.

It is found in the cytoplasm. It carries out the reaction AMP + ATP = 2 ADP. Its pathway is purine metabolism; AMP biosynthesis via salvage pathway; AMP from ADP: step 1/1. Functionally, catalyzes the reversible transfer of the terminal phosphate group between ATP and AMP. Plays an important role in cellular energy homeostasis and in adenine nucleotide metabolism. In Caulobacter sp. (strain K31), this protein is Adenylate kinase.